A 319-amino-acid polypeptide reads, in one-letter code: Replication factor C small subunit 2 (319 aa).

44 to 51 provides a ligand contact to ATP; sequence GPPGTGKT.

The protein belongs to the activator 1 small subunits family. RfcS subfamily. In terms of assembly, heteromultimer composed of small subunits (RfcS) and large subunits (RfcL).

In terms of biological role, part of the RFC clamp loader complex which loads the PCNA sliding clamp onto DNA. The chain is Replication factor C small subunit 2 from Pyrobaculum aerophilum (strain ATCC 51768 / DSM 7523 / JCM 9630 / CIP 104966 / NBRC 100827 / IM2).